The chain runs to 574 residues: Sulfate adenylyltransferase (574 aa).

An N-terminal region spans residues 1-170 (MANPPHGGVL…VEAIDRLEHY (170 aa)). The interval 171–395 (DYVGLRYTPA…LRESHPPRNQ (225 aa)) is catalytic. Gln-198 lines the sulfate pocket. ATP is bound by residues 198-201 (QTRN) and 292-295 (GRDH). Active-site residues include Thr-199, Arg-200, and Asn-201. Sulfate is bound at residue Arg-200. Ala-296 contributes to the sulfate binding site. Residue Met-334 participates in ATP binding. Residues 396 to 574 (QGFTVFLTGY…LESQGLLTQL (179 aa)) are allosteric regulation domain; adenylyl-sulfate kinase-like. 3'-phosphoadenylyl sulfate-binding positions include 435-438 (ETVR), Arg-452, 478-479 (IA), and Arg-516.

This sequence in the N-terminal section; belongs to the sulfate adenylyltransferase family. The protein in the C-terminal section; belongs to the APS kinase family. Homohexamer. Dimer of trimers.

The protein resides in the cytoplasm. It carries out the reaction sulfate + ATP + H(+) = adenosine 5'-phosphosulfate + diphosphate. It participates in sulfur metabolism; hydrogen sulfide biosynthesis; sulfite from sulfate: step 1/3. Allosterically inhibited by 3'-phosphoadenosine 5'-phosphosulfate (PAPS). Its function is as follows. Catalyzes the first intracellular reaction of sulfate assimilation, forming adenosine-5'-phosphosulfate (APS) from inorganic sulfate and ATP. Plays an important role in sulfate activation as a component of the biosynthesis pathway of sulfur-containing amino acids. The polypeptide is Sulfate adenylyltransferase (Phaeosphaeria nodorum (strain SN15 / ATCC MYA-4574 / FGSC 10173) (Glume blotch fungus)).